We begin with the raw amino-acid sequence, 708 residues long: Metabotropic glutamate receptor-like protein L (708 aa).

A signal peptide spans 1 to 24; it reads MKLIIKNLILLLVSCLYFLSNVSC. N-linked (GlcNAc...) asparagine glycans are attached at residues Asn-21, Asn-235, Asn-310, and Asn-366. The Extracellular segment spans residues 25-370; the sequence is DQEVHMALLL…TTGSINKTFM (346 aa). A helical membrane pass occupies residues 371 to 391; the sequence is AVSILEMAICLIIGIIVIFFF. The Cytoplasmic segment spans residues 392–401; it reads SRNINIIYST. Residues 402–422 traverse the membrane as a helical segment; it reads IPYCLTILLGASLIAVAIFLW. Topologically, residues 423-435 are extracellular; that stretch reads NLRDLNTQICTSK. Residues 436–456 traverse the membrane as a helical segment; sequence IWMASLGYNVLIGFIIIKSSL. Topologically, residues 457–479 are cytoplasmic; sequence IYFKFKEMVKSKNEKISPIPFGR. Residues 480–500 traverse the membrane as a helical segment; it reads IVLWFVPLLIIDCVLLIIYST. At 501-531 the chain is on the extracellular side; that stretch reads SGNPGKIDSLGLDGIGRYEYTQNCVNNLTGD. An N-linked (GlcNAc...) asparagine glycan is attached at Asn-527. A helical transmembrane segment spans residues 532–552; that stretch reads IILYIILVFHGLQLLYGCVIA. Residues 553–568 are Cytoplasmic-facing; the sequence is WKTRVIDLEEFIEAHD. Residues 569–589 traverse the membrane as a helical segment; it reads FATAIYLITFCSFIIVILMVG. The Extracellular segment spans residues 590–597; it reads VTSTSNRN. A helical transmembrane segment spans residues 598-618; sequence TIISACAIFSSFSCVLIIFGA. The Cytoplasmic segment spans residues 619-708; that stretch reads KFWKIYKPVE…SSRAAAQNDN (90 aa). The tract at residues 638–681 is disordered; sequence KPQKSYSGSGGSGNSSGSKSKKTSAHSSTSGVKSGTSAPTQTSQ. Polar residues predominate over residues 669–681; it reads VKSGTSAPTQTSQ.

The protein in the N-terminal section; belongs to the BMP lipoprotein family. In the C-terminal section; belongs to the G-protein coupled receptor 3 family. GABA-B receptor subfamily.

It is found in the membrane. The polypeptide is Metabotropic glutamate receptor-like protein L (far1) (Dictyostelium discoideum (Social amoeba)).